The sequence spans 448 residues: Late embryogenesis abundant protein ECP63 (448 aa).

Basic and acidic residues-rich tracts occupy residues 282 to 326 and 334 to 354; these read TEEA…EEAG and QKTR…KDSA. 2 disordered regions span residues 282 to 360 and 411 to 448; these read TEEA…RGNE and SKPG…KGKL. Positions 297–331 form a coiled coil; sequence KENMEKAGEVTRQKMEEMRLEGKELKEEAGAKAQE. The segment covering 420–432 has biased composition (polar residues); sequence LKASDQMTGQTFN. Residues 435-448 show a composition bias toward basic and acidic residues; that stretch reads GRMDDDARKDKGKL.

The protein belongs to the LEA type 4 family. As to expression, expressed in mature seeds.

Its function is as follows. May be involved in the BHLH109-mediated regulation of somatic embryogenesis. This is Late embryogenesis abundant protein ECP63 from Arabidopsis thaliana (Mouse-ear cress).